The sequence spans 367 residues: Histidinol-phosphate aminotransferase (367 aa).

Lys-222 is modified (N6-(pyridoxal phosphate)lysine).

Belongs to the class-II pyridoxal-phosphate-dependent aminotransferase family. Histidinol-phosphate aminotransferase subfamily. Pyridoxal 5'-phosphate serves as cofactor.

It carries out the reaction L-histidinol phosphate + 2-oxoglutarate = 3-(imidazol-4-yl)-2-oxopropyl phosphate + L-glutamate. It participates in amino-acid biosynthesis; L-histidine biosynthesis; L-histidine from 5-phospho-alpha-D-ribose 1-diphosphate: step 7/9. The protein is Histidinol-phosphate aminotransferase of Methanosphaera stadtmanae (strain ATCC 43021 / DSM 3091 / JCM 11832 / MCB-3).